A 520-amino-acid chain; its full sequence is Cysteine--tRNA ligase (520 aa).

C29 serves as a coordination point for Zn(2+). The 'HIGH' region motif lies at P31 to N41. Zn(2+) is bound by residues C227, H252, and E256. The 'KMSKS' region signature appears at K301–S305. ATP is bound at residue K304.

It belongs to the class-I aminoacyl-tRNA synthetase family. As to quaternary structure, monomer. It depends on Zn(2+) as a cofactor.

Its subcellular location is the cytoplasm. The enzyme catalyses tRNA(Cys) + L-cysteine + ATP = L-cysteinyl-tRNA(Cys) + AMP + diphosphate. The protein is Cysteine--tRNA ligase (cysS) of Treponema pallidum (strain Nichols).